Consider the following 981-residue polypeptide: Anoctamin-3 (981 aa).

Polar residues predominate over residues 1 to 22 (MVHHSGSIQSFKQQKGMNISKS). The tract at residues 1-33 (MVHHSGSIQSFKQQKGMNISKSEITKETSLKPS) is disordered. At 1–403 (MVHHSGSIQS…LYFAWLGWYT (403 aa)) the chain is on the cytoplasmic side. Residues 404 to 424 (GMLIPAAIVGLCVFFYGLFTM) form a helical membrane-spanning segment. N-linked (GlcNAc...) asparagine glycosylation is found at N425, N448, and N455. Residues 425–469 (NNSQVSQEICKATEVFMCPLCDKNCSLQRLNDSCIYAKVTYLFDN) lie on the Extracellular side of the membrane. Residues 470–490 (GGTVFFAIFMAIWATVFLEFW) traverse the membrane as a helical segment. Residues 491–550 (KRRRSILTYTWDLIEWEEEEETLRPQFEAKYYKMEIVNPITGKPEPHQPSSDKVTRLLVS) are Cytoplasmic-facing. The helical transmembrane segment at 551 to 571 (VSGIFFMISLVITAVFGVVVY) threads the bilayer. Topologically, residues 572–592 (RLVVMEQFASFKWNFIKQYWQ) are extracellular. Residues 593–613 (FATSAAAVCINFIIIMLLNLA) traverse the membrane as a helical segment. Residues 614–640 (YEKIAYLLTNLEYPRTESEWENSFALK) lie on the Cytoplasmic side of the membrane. Residues 641–661 (MFLFQFVNLNSSIFYIAFFLG) form a helical membrane-spanning segment. Over 662–761 (RFVGHPGKYN…MDEYLEMVLQ (100 aa)) the chain is Extracellular. Residues 762–782 (FGFTTIFVAAFPLAPLLALLN) traverse the membrane as a helical segment. The Cytoplasmic segment spans residues 783-810 (NIIEIRLDAYKFVTQWRRPLPARATDIG). Residues 811 to 831 (IWLGILEGIGILAVITNAFVI) form a helical membrane-spanning segment. The Extracellular segment spans residues 832–914 (AITSDYIPRF…QYWHILAARL (83 aa)). N866 carries an N-linked (GlcNAc...) asparagine glycan. Residues 915–935 (AFIIVFEHLVFGIKSFIAYLI) form a helical membrane-spanning segment. Over 936-981 (PDVPKGLHDRIRREKYLVQEMMYEAELEHLQQQRRKSGQPVHHEWP) the chain is Cytoplasmic.

This sequence belongs to the anoctamin family. As to quaternary structure, interacts with KCNT1/Slack. As to expression, highly expressed in the forebrain striatum.

The protein resides in the cell membrane. It catalyses the reaction a 1,2-diacyl-sn-glycero-3-phosphocholine(in) = a 1,2-diacyl-sn-glycero-3-phosphocholine(out). It carries out the reaction a beta-D-galactosyl-(1&lt;-&gt;1')-N-acylsphing-4-enine(out) = a beta-D-galactosyl-(1&lt;-&gt;1')-N-acylsphing-4-enine(in). Has calcium-dependent phospholipid scramblase activity; scrambles phosphatidylcholine and galactosylceramide. Seems to act as potassium channel regulator and may inhibit pain signaling; can facilitate KCNT1/Slack channel activity by promoting its full single-channel conductance at very low sodium concentrations and by increasing its sodium sensitivity. Does not exhibit calcium-activated chloride channel (CaCC) activity. This Homo sapiens (Human) protein is Anoctamin-3 (ANO3).